The primary structure comprises 210 residues: Glutathione S-transferase P (210 aa).

Residues 2–81 enclose the GST N-terminal domain; that stretch reads PPYTIVYFPV…HLGRSLGLYG (80 aa). Position 4 is a phosphotyrosine; by EGFR (Y4). Residues Y8, R14, W39, K45, 52–53, and 65–66 contribute to the glutathione site; these read QL and QS. Residues 83–204 enclose the GST C-terminal domain; it reads DQKEAALVDM…SSPDHVNRPI (122 aa). N6-succinyllysine is present on residues K103 and K116. Position 128 is an N6-acetyllysine (K128).

This sequence belongs to the GST superfamily. Pi family. Homodimer. Interacts with CDK5.

It localises to the cytoplasm. The protein localises to the mitochondrion. Its subcellular location is the nucleus. The enzyme catalyses RX + glutathione = an S-substituted glutathione + a halide anion + H(+). The catalysed reaction is prostaglandin J2 + glutathione = prostaglandin J2-S-(R)-glutathione. It catalyses the reaction prostaglandin J2 + glutathione = prostaglandin J2-S-(S)-glutathione. It carries out the reaction prostaglandin A2 + glutathione = prostaglandin A2-S-(S)-glutathione. The enzyme catalyses 11(S)-hydroxy-14(S),15(S)-epoxy-(5Z,8Z,12E)-eicosatrienoate + glutathione = (11S,15S)-dihydroxy-14(R)-S-glutathionyl-(5Z,8Z,12E)-eicosatrienoate. Conjugation of reduced glutathione to a wide number of exogenous and endogenous hydrophobic electrophiles. Involved in the formation of glutathione conjugates of both prostaglandin A2 (PGA2) and prostaglandin J2 (PGJ2). Participates in the formation of novel hepoxilin regioisomers. Negatively regulates CDK5 activity via p25/p35 translocation to prevent neurodegeneration. The chain is Glutathione S-transferase P (GSTP1) from Mesocricetus auratus (Golden hamster).